A 205-amino-acid polypeptide reads, in one-letter code: Outer-membrane lipoprotein carrier protein (205 aa).

A signal peptide spans 1–19; the sequence is MKKIIICFIFVFSINVSFA.

Belongs to the LolA family. In terms of assembly, monomer.

The protein resides in the periplasm. Participates in the translocation of lipoproteins from the inner membrane to the outer membrane. Only forms a complex with a lipoprotein if the residue after the N-terminal Cys is not an aspartate (The Asp acts as a targeting signal to indicate that the lipoprotein should stay in the inner membrane). In Francisella tularensis subsp. holarctica (strain LVS), this protein is Outer-membrane lipoprotein carrier protein.